A 78-amino-acid chain; its full sequence is Delta-conotoxin TxVIA (78 aa).

The N-terminal stretch at 1–22 (MKLTCMMIVAVLFLTAWTFATA) is a signal peptide. The propeptide occupies 23 to 49 (DDPRNGLGNLFSNAHHEMKNPEASKLN). Disulfide bonds link cysteine 53-cysteine 68, cysteine 60-cysteine 72, and cysteine 67-cysteine 77. Position 59 is a methionine sulfoxide; partial (methionine 59).

Belongs to the conotoxin O1 superfamily. In terms of tissue distribution, expressed by the venom duct.

Its subcellular location is the secreted. Delta-conotoxins bind to site 6 of voltage-gated sodium channels (Nav) and inhibit the inactivation process. Binding of this toxin is strongly calcium-dependent but not voltage-dependent. The binding site is most likely on the extracellular side of the sodium channel. Binds receptor sites on both mollusk and rat central nervous system, but despite its high affinity binding to rat sodium channel, it has no functional effect in vivo and in vitro on it. Also has no effect on Gambusia fish. Is important in mollusk for the paralysis of the prey. Upon injection of the peptide, a subordinate lobster assumes an exaggerated dominant posture (of a 'King-Kong' lobster!). The sequence is that of Delta-conotoxin TxVIA from Conus textile (Cloth-of-gold cone).